Consider the following 54-residue polypeptide: uncharacterized protein (54 aa).

Residues 1-21 (MNSKQILSLSAFAMTIATAAA) form the signal peptide. At 22 to 29 (GNWNAGDT) the chain is on the extracellular side. Residues 30–50 (IALLIGIAMFFVLLLALLGWI) traverse the membrane as a helical segment. Residues 51-54 (SRKK) lie on the Cytoplasmic side of the membrane.

The protein resides in the membrane. This is an uncharacterized protein from Dictyostelium discoideum (Social amoeba).